Here is an 869-residue protein sequence, read N- to C-terminus: MQDIYRHQDIESHVQRHWEQTQTFTVKEDPKKEKYYCLAMWPYPSGRLHMGHVRNYTITDVIARYQRMLGKNVLQPMGWDAFGLPAEGAAIKNKTSPIDWTKANIQYMKKQLQSLGFAYDWSRELTSCKPEYYRWEQWFFTQLYEKGLVYKKTSDVNWCPQDFTVLANEQVIDGRCWRCDSKVERKSIPQWFIKITAYADQLLDDLDELEHWPEQVKTMQRHWIGRSEGVEIRFPLDHDEKTDLTVYSTRPDTLMGVAFIAIAPDHFFSAEIAKNVPALATFIEECRHIKMAEAETATIEKKGIDTGFFALHPLTGKKIPIWVANFVLMEYGTGAVMGVPGHDQRDWEFATQYHLPIKAVILLEDGTEPDVQKKPLIEKGRLCHSGEFNGLSYQESCDRIIDKLVDLGTGQRKVNYRLRDWGVSRQRYWGAPIPMITLEDGRIIGTPEDQLPVILPEKTLIKDMINPLKADQDWAKTSVAGQLGIRETDTFDTFIESSWYYARYACPKYDQGMIEKAAANYWLPVDQYVGGIEHAIMHLLYFRFFHKLMRDQGLVDSKEPAKRLLCQGMVLADAFYYNAQNGERVWVSPTEVTVERDNKGQFLNAFDAQGRDLIHAGMSKMSKSKNNGIDPQAIVEKYGADTVRLFMMFASAPEMTLEWQESGLEGAYRFLKRLWRFVFDHVIQGPTQPLKKENLNSTQKNLRRNLHKTIAKVTDDIGRRQTFNTAIAAIMELMNQLYRAPTNTEQDRALIQEACISVIKMLYPFTPHISFILWQHLHQSPDETHPLNIDDSLWPVVDQNALIEDETLVVIQINGKMRAKITVPMNSTQQEVYESALQEPTVIKHLKGITPCHVIYVPNKLLNLVVNNE.

A 'HIGH' region motif is present at residues 42-52 (PYPSGRLHMGH). The 'KMSKS' region motif lies at 620 to 624 (KMSKS). ATP is bound at residue K623.

This sequence belongs to the class-I aminoacyl-tRNA synthetase family.

The protein resides in the cytoplasm. The enzyme catalyses tRNA(Leu) + L-leucine + ATP = L-leucyl-tRNA(Leu) + AMP + diphosphate. This Hamiltonella defensa subsp. Acyrthosiphon pisum (strain 5AT) protein is Leucine--tRNA ligase.